The chain runs to 106 residues: Cell division protein FtsL (106 aa).

At 1–22 (MPRQSPPNLAKLIALDLLTVGR) the chain is on the cytoplasmic side. Residues 23–43 (VPLLLLVLIFSCAMGVVFMTH) traverse the membrane as a helical segment. Over 44–106 (HTRQAISAKD…SDKEVVINLK (63 aa)) the chain is Periplasmic.

It belongs to the FtsL family. Part of a complex composed of FtsB, FtsL and FtsQ.

It is found in the cell inner membrane. Functionally, essential cell division protein. May link together the upstream cell division proteins, which are predominantly cytoplasmic, with the downstream cell division proteins, which are predominantly periplasmic. In Vibrio cholerae serotype O1 (strain ATCC 39315 / El Tor Inaba N16961), this protein is Cell division protein FtsL.